The chain runs to 453 residues: Phosphoglucosamine mutase (453 aa).

Catalysis depends on Ser110, which acts as the Phosphoserine intermediate. Residues Ser110, Asp247, Asp249, and Asp251 each coordinate Mg(2+). Ser110 is modified (phosphoserine).

Belongs to the phosphohexose mutase family. Mg(2+) serves as cofactor. Activated by phosphorylation.

The catalysed reaction is alpha-D-glucosamine 1-phosphate = D-glucosamine 6-phosphate. Functionally, catalyzes the conversion of glucosamine-6-phosphate to glucosamine-1-phosphate. In Tropheryma whipplei (strain TW08/27) (Whipple's bacillus), this protein is Phosphoglucosamine mutase.